The sequence spans 207 residues: p-benzoquinone reductase (207 aa).

In terms of domain architecture, Flavodoxin-like spans Ile5–Val196. FMN-binding positions include Ser11–Ile16, Thr84–Phe86, Ser119–Gly125, and His140. Residue Tyr13 coordinates NADP(+).

The protein belongs to the WrbA family. In terms of assembly, homodimer. FMN is required as a cofactor.

The enzyme catalyses 1,4-benzoquinone + NADPH + H(+) = hydroquinone + NADP(+). Its pathway is xenobiotic degradation; 4-nitrophenol degradation. Involved in the degradation of para-nitrophenol (PNP). Catalyzes the reduction of p-benzoquinone to hydroquinone. The chain is p-benzoquinone reductase (pnpB) from Pseudomonas sp. (strain WBC-3).